The primary structure comprises 179 residues: Large ribosomal subunit protein uL5 (179 aa).

It belongs to the universal ribosomal protein uL5 family. Part of the 50S ribosomal subunit; part of the 5S rRNA/L5/L18/L25 subcomplex. Contacts the 5S rRNA and the P site tRNA. Forms a bridge to the 30S subunit in the 70S ribosome.

This is one of the proteins that bind and probably mediate the attachment of the 5S RNA into the large ribosomal subunit, where it forms part of the central protuberance. In the 70S ribosome it contacts protein S13 of the 30S subunit (bridge B1b), connecting the 2 subunits; this bridge is implicated in subunit movement. Contacts the P site tRNA; the 5S rRNA and some of its associated proteins might help stabilize positioning of ribosome-bound tRNAs. The protein is Large ribosomal subunit protein uL5 of Neisseria meningitidis serogroup C (strain 053442).